Reading from the N-terminus, the 728-residue chain is 1,4-alpha-glucan branching enzyme GlgB (728 aa).

The active-site Nucleophile is the Asp-405. Catalysis depends on Glu-458, which acts as the Proton donor.

It belongs to the glycosyl hydrolase 13 family. GlgB subfamily. Monomer.

The enzyme catalyses Transfers a segment of a (1-&gt;4)-alpha-D-glucan chain to a primary hydroxy group in a similar glucan chain.. Its pathway is glycan biosynthesis; glycogen biosynthesis. Functionally, catalyzes the formation of the alpha-1,6-glucosidic linkages in glycogen by scission of a 1,4-alpha-linked oligosaccharide from growing alpha-1,4-glucan chains and the subsequent attachment of the oligosaccharide to the alpha-1,6 position. The sequence is that of 1,4-alpha-glucan branching enzyme GlgB from Escherichia coli O6:H1 (strain CFT073 / ATCC 700928 / UPEC).